Reading from the N-terminus, the 618-residue chain is Proline--tRNA ligase (618 aa).

This sequence belongs to the class-II aminoacyl-tRNA synthetase family. ProS type 1 subfamily. In terms of assembly, homodimer.

The protein localises to the cytoplasm. The catalysed reaction is tRNA(Pro) + L-proline + ATP = L-prolyl-tRNA(Pro) + AMP + diphosphate. Catalyzes the attachment of proline to tRNA(Pro) in a two-step reaction: proline is first activated by ATP to form Pro-AMP and then transferred to the acceptor end of tRNA(Pro). As ProRS can inadvertently accommodate and process non-cognate amino acids such as alanine and cysteine, to avoid such errors it has two additional distinct editing activities against alanine. One activity is designated as 'pretransfer' editing and involves the tRNA(Pro)-independent hydrolysis of activated Ala-AMP. The other activity is designated 'posttransfer' editing and involves deacylation of mischarged Ala-tRNA(Pro). The misacylated Cys-tRNA(Pro) is not edited by ProRS. The chain is Proline--tRNA ligase from Streptococcus equi subsp. equi (strain 4047).